Reading from the N-terminus, the 123-residue chain is Small ribosomal subunit protein uS12 (123 aa).

The residue at position 89 (Asp-89) is a 3-methylthioaspartic acid.

It belongs to the universal ribosomal protein uS12 family. In terms of assembly, part of the 30S ribosomal subunit. Contacts proteins S8 and S17. May interact with IF1 in the 30S initiation complex.

With S4 and S5 plays an important role in translational accuracy. Functionally, interacts with and stabilizes bases of the 16S rRNA that are involved in tRNA selection in the A site and with the mRNA backbone. Located at the interface of the 30S and 50S subunits, it traverses the body of the 30S subunit contacting proteins on the other side and probably holding the rRNA structure together. The combined cluster of proteins S8, S12 and S17 appears to hold together the shoulder and platform of the 30S subunit. This Bifidobacterium animalis subsp. lactis (strain AD011) protein is Small ribosomal subunit protein uS12.